Reading from the N-terminus, the 264-residue chain is Probable amino-acid-binding protein YxeM (264 aa).

A signal peptide spans 1-20 (MKMKKWTVLVVAALLAVLSA). Residue cysteine 21 is the site of N-palmitoyl cysteine attachment. A lipid anchor (S-diacylglycerol cysteine) is attached at cysteine 21.

Belongs to the bacterial solute-binding protein 3 family. In terms of assembly, the complex is composed of two ATP-binding proteins (YxeO), two transmembrane proteins (YxeN) and a solute-binding protein (YxeM).

The protein localises to the cell membrane. The protein resides in the membrane raft. In terms of biological role, probably part of the ABC transporter complex YxeMNO that could be involved in amino-acid import. May transport S-methylcysteine. The protein is Probable amino-acid-binding protein YxeM (yxeM) of Bacillus subtilis (strain 168).